The following is a 361-amino-acid chain: MKGLILVGGYGTRLRPLTLTVPKPLVEFGNRPMILHQIEALANAGVTDIVLAVNYRPEVMVETLKKYEKEYGVNITFSVETEPLGTAGPLKLAEDVLKKDNSPFFVLNSDVICEYPFKELADFHKAHGGKGTIVATKVDEPSKYGVIVHDIATPNLIDRFVEKPKEFVGNRINAGLYILNPEVIDLIEMKPTSIEKETFPILVEEKQLYSFDLEGFWMDVGQPKDFLSGTVLYLNSLAKRQPKKLATGANIVGNALIDPTAKISSTAKIGPDVVIGPNVTIGDGVRITRSVVLCNSTIKNHSLVKSTIVGWNSTVGQWCRLEGVTVLGDDVEVKDEIYINGGKVLPHKSISDNVPKEAIIM.

Threonine 153 bears the Phosphothreonine mark. Residue lysine 244 forms a Glycyl lysine isopeptide (Lys-Gly) (interchain with G-Cter in ubiquitin) linkage.

The protein belongs to the transferase hexapeptide repeat family.

It localises to the cytoplasm. It catalyses the reaction alpha-D-mannose 1-phosphate + GTP + H(+) = GDP-alpha-D-mannose + diphosphate. The protein operates within nucleotide-sugar biosynthesis; GDP-alpha-D-mannose biosynthesis; GDP-alpha-D-mannose from alpha-D-mannose 1-phosphate (GTP route): step 1/1. Functionally, involved in cell wall synthesis where it is required for glycosylation. Involved in cell cycle progression through cell-size checkpoint. The chain is Mannose-1-phosphate guanyltransferase (PSA1) from Saccharomyces cerevisiae (strain ATCC 204508 / S288c) (Baker's yeast).